The following is a 275-amino-acid chain: Hydroxyethylthiazole kinase (275 aa).

M53 is a binding site for substrate. ATP-binding residues include R128 and S174. G201 lines the substrate pocket.

The protein belongs to the Thz kinase family. It depends on Mg(2+) as a cofactor.

It carries out the reaction 5-(2-hydroxyethyl)-4-methylthiazole + ATP = 4-methyl-5-(2-phosphooxyethyl)-thiazole + ADP + H(+). It functions in the pathway cofactor biosynthesis; thiamine diphosphate biosynthesis; 4-methyl-5-(2-phosphoethyl)-thiazole from 5-(2-hydroxyethyl)-4-methylthiazole: step 1/1. Its function is as follows. Catalyzes the phosphorylation of the hydroxyl group of 4-methyl-5-beta-hydroxyethylthiazole (THZ). The protein is Hydroxyethylthiazole kinase of Kineococcus radiotolerans (strain ATCC BAA-149 / DSM 14245 / SRS30216).